The chain runs to 519 residues: AAA-ATPase At4g30250 (519 aa).

Residues Met-1 to Leu-24 form the signal peptide. Gly-252–Ser-259 contacts ATP. Disordered stretches follow at residues Gly-315 to Gly-335 and Lys-467 to Lys-519. A compositionally biased stretch (acidic residues) spans Gln-479–Glu-488. The segment covering Gln-489–Arg-508 has biased composition (basic and acidic residues). Over residues Glu-509–Lys-519 the composition is skewed to acidic residues.

The protein belongs to the AAA ATPase family. BCS1 subfamily. Mg(2+) is required as a cofactor.

The catalysed reaction is ATP + H2O = ADP + phosphate + H(+). This chain is AAA-ATPase At4g30250, found in Arabidopsis thaliana (Mouse-ear cress).